Here is a 124-residue protein sequence, read N- to C-terminus: UPF0337 protein blr1496 (124 aa).

It belongs to the UPF0337 (CsbD) family.

The sequence is that of UPF0337 protein blr1496 from Bradyrhizobium diazoefficiens (strain JCM 10833 / BCRC 13528 / IAM 13628 / NBRC 14792 / USDA 110).